The chain runs to 518 residues: Retinal dehydrogenase 2 (518 aa).

Phosphotyrosine is present on tyrosine 168. Residues 184-186 (IPW), 210-213 (KPAE), and 264-266 (STE) contribute to the NAD(+) site. Glutamate 286 functions as the Proton acceptor in the catalytic mechanism. The Nucleophile role is filled by cysteine 320. Residue serine 351 is modified to Phosphoserine. NAD(+)-binding positions include 366 to 370 (KQYNK) and glutamate 417.

This sequence belongs to the aldehyde dehydrogenase family. As to quaternary structure, homotetramer. In terms of tissue distribution, found in testis and less abundantly in lung, brain, heart, liver and kidney.

The protein localises to the cytoplasm. The catalysed reaction is retinal + NAD(+) + H2O = retinoate + NADH + 2 H(+). The enzyme catalyses all-trans-retinal + NAD(+) + H2O = all-trans-retinoate + NADH + 2 H(+). It catalyses the reaction all-trans-13,14-dihydroretinal + NAD(+) + H2O = all-trans-13,14-dihydroretinoate + NADH + 2 H(+). It participates in cofactor metabolism; retinol metabolism. In terms of biological role, catalyzes the NAD-dependent oxidation of aldehyde substrates, such as all-trans-retinal and all-trans-13,14-dihydroretinal, to their corresponding carboxylic acids, all-trans-retinoate and all-trans-13,14-dihydroretinoate, respectively. Retinoate signaling is critical for the transcriptional control of many genes, for instance it is crucial for initiation of meiosis in both male and female. Recognizes retinal as substrate, both in its free form and when bound to cellular retinol-binding protein. Lacks activity with benzaldehyde, acetaldehyde and octanal. Displays complete lack of activity with citral. In Rattus norvegicus (Rat), this protein is Retinal dehydrogenase 2 (Aldh1a2).